Here is a 94-residue protein sequence, read N- to C-terminus: Co-chaperonin GroES (94 aa).

The protein belongs to the GroES chaperonin family. In terms of assembly, heptamer of 7 subunits arranged in a ring. Interacts with the chaperonin GroEL.

Its subcellular location is the cytoplasm. Functionally, together with the chaperonin GroEL, plays an essential role in assisting protein folding. The GroEL-GroES system forms a nano-cage that allows encapsulation of the non-native substrate proteins and provides a physical environment optimized to promote and accelerate protein folding. GroES binds to the apical surface of the GroEL ring, thereby capping the opening of the GroEL channel. The polypeptide is Co-chaperonin GroES (Orientia tsutsugamushi (Rickettsia tsutsugamushi)).